The sequence spans 470 residues: 3-isopropylmalate dehydratase large subunit (470 aa).

The [4Fe-4S] cluster site is built by cysteine 351, cysteine 411, and cysteine 414.

It belongs to the aconitase/IPM isomerase family. LeuC type 1 subfamily. As to quaternary structure, heterodimer of LeuC and LeuD. Requires [4Fe-4S] cluster as cofactor.

The enzyme catalyses (2R,3S)-3-isopropylmalate = (2S)-2-isopropylmalate. It functions in the pathway amino-acid biosynthesis; L-leucine biosynthesis; L-leucine from 3-methyl-2-oxobutanoate: step 2/4. Its function is as follows. Catalyzes the isomerization between 2-isopropylmalate and 3-isopropylmalate, via the formation of 2-isopropylmaleate. The chain is 3-isopropylmalate dehydratase large subunit from Rhodopseudomonas palustris (strain BisA53).